A 519-amino-acid chain; its full sequence is C-glycoside 3-oxidase (519 aa).

Position 41 (E41) interacts with FAD. Residues 43–93 are disordered; the sequence is GPTVSNPPGAHVKNIEDPERRSHAQRASEGPGAGAETVNSPGAVKSGERRA. Residues 55–64 are compositionally biased toward basic and acidic residues; the sequence is KNIEDPERRS. Positions 118, 120, 124, 129, 131, and 234 each coordinate FAD. Catalysis depends on H440, which acts as the Proton acceptor. N474 and T486 together coordinate FAD.

Belongs to the GMC oxidoreductase family. As to quaternary structure, monomer. FAD serves as cofactor.

The enzyme catalyses isovitexin + O2 = 3''-dehydroisovitexin + H2O2. It catalyses the reaction isoorientin + O2 = 3''-dehydroisoorientin + H2O2. It carries out the reaction mangiferin + O2 = 3'-dehydromangiferin + H2O2. Functionally, FAD-dependent C-glycoside-metabolizing enzyme that participates in the degradation of certain C-glycosides by catalyzing the oxidation of the hydroxyl group at the C3 position of the sugar moiety. Shows oxidase activity toward various C-glycosides such as isovitexin, isoorientin and mangiferin but cannot use carminic acid, puerarin, orientin or aloesin. Shows weak activity (100 to 1000-fold lower) with O-glycosides. Probably plays a crucial role in the metabolism of C-glycosides in nature. In Arthrobacter globiformis (strain ATCC 8010 / DSM 20124 / JCM 1332 / NBRC 12137 / NCIMB 8907 / NRRL B-2979 / 168), this protein is C-glycoside 3-oxidase.